We begin with the raw amino-acid sequence, 336 residues long: Holliday junction branch migration complex subunit RuvB (336 aa).

The tract at residues 1-182 (MKERIVNLET…FGMSFRMQFY (182 aa)) is large ATPase domain (RuvB-L). Residues Leu-21, Arg-22, Gly-63, Lys-66, Thr-67, Ser-68, 129–131 (EDF), Arg-172, Tyr-182, and Arg-219 each bind ATP. Position 67 (Thr-67) interacts with Mg(2+). The interval 183–253 (SPSELALIIK…ITLHALNELG (71 aa)) is small ATPAse domain (RuvB-S). Positions 256 to 336 (ELGFDEADLA…IPTLKSQTLF (81 aa)) are head domain (RuvB-H). Residues Arg-310 and Arg-315 each coordinate DNA.

Belongs to the RuvB family. Homohexamer. Forms an RuvA(8)-RuvB(12)-Holliday junction (HJ) complex. HJ DNA is sandwiched between 2 RuvA tetramers; dsDNA enters through RuvA and exits via RuvB. An RuvB hexamer assembles on each DNA strand where it exits the tetramer. Each RuvB hexamer is contacted by two RuvA subunits (via domain III) on 2 adjacent RuvB subunits; this complex drives branch migration. In the full resolvosome a probable DNA-RuvA(4)-RuvB(12)-RuvC(2) complex forms which resolves the HJ.

It localises to the cytoplasm. The catalysed reaction is ATP + H2O = ADP + phosphate + H(+). In terms of biological role, the RuvA-RuvB-RuvC complex processes Holliday junction (HJ) DNA during genetic recombination and DNA repair, while the RuvA-RuvB complex plays an important role in the rescue of blocked DNA replication forks via replication fork reversal (RFR). RuvA specifically binds to HJ cruciform DNA, conferring on it an open structure. The RuvB hexamer acts as an ATP-dependent pump, pulling dsDNA into and through the RuvAB complex. RuvB forms 2 homohexamers on either side of HJ DNA bound by 1 or 2 RuvA tetramers; 4 subunits per hexamer contact DNA at a time. Coordinated motions by a converter formed by DNA-disengaged RuvB subunits stimulates ATP hydrolysis and nucleotide exchange. Immobilization of the converter enables RuvB to convert the ATP-contained energy into a lever motion, pulling 2 nucleotides of DNA out of the RuvA tetramer per ATP hydrolyzed, thus driving DNA branch migration. The RuvB motors rotate together with the DNA substrate, which together with the progressing nucleotide cycle form the mechanistic basis for DNA recombination by continuous HJ branch migration. Branch migration allows RuvC to scan DNA until it finds its consensus sequence, where it cleaves and resolves cruciform DNA. This is Holliday junction branch migration complex subunit RuvB from Helicobacter pylori (strain HPAG1).